A 384-amino-acid polypeptide reads, in one-letter code: S-adenosylmethionine synthase (384 aa).

Residue His-15 coordinates ATP. Residue Asp-17 participates in Mg(2+) binding. Glu-43 serves as a coordination point for K(+). L-methionine-binding residues include Glu-56 and Gln-99. The flexible loop stretch occupies residues 99–109; sequence QSSDINQGVDR. ATP is bound by residues 164–166, 230–231, Asp-239, 245–246, Ala-262, and Lys-266; these read DAK, RF, and RK. Asp-239 is a binding site for L-methionine. Residue Lys-270 coordinates L-methionine.

Belongs to the AdoMet synthase family. As to quaternary structure, homotetramer; dimer of dimers. Mg(2+) serves as cofactor. Requires K(+) as cofactor.

It localises to the cytoplasm. The enzyme catalyses L-methionine + ATP + H2O = S-adenosyl-L-methionine + phosphate + diphosphate. Its pathway is amino-acid biosynthesis; S-adenosyl-L-methionine biosynthesis; S-adenosyl-L-methionine from L-methionine: step 1/1. Functionally, catalyzes the formation of S-adenosylmethionine (AdoMet) from methionine and ATP. The overall synthetic reaction is composed of two sequential steps, AdoMet formation and the subsequent tripolyphosphate hydrolysis which occurs prior to release of AdoMet from the enzyme. This is S-adenosylmethionine synthase from Pasteurella multocida (strain Pm70).